The primary structure comprises 717 residues: DNA ligase (717 aa).

Residues 44 to 48 (DADYD), 93 to 94 (SL), and Glu-127 each bind NAD(+). Lys-129 serves as the catalytic N6-AMP-lysine intermediate. Positions 150, 186, 302, and 326 each coordinate NAD(+). Positions 431, 434, 455, and 461 each coordinate Zn(2+). The region spanning 639 to 717 (ATDSPVAGKT…EDEWLALIGG (79 aa)) is the BRCT domain.

Belongs to the NAD-dependent DNA ligase family. LigA subfamily. Mg(2+) serves as cofactor. Mn(2+) is required as a cofactor.

The catalysed reaction is NAD(+) + (deoxyribonucleotide)n-3'-hydroxyl + 5'-phospho-(deoxyribonucleotide)m = (deoxyribonucleotide)n+m + AMP + beta-nicotinamide D-nucleotide.. Functionally, DNA ligase that catalyzes the formation of phosphodiester linkages between 5'-phosphoryl and 3'-hydroxyl groups in double-stranded DNA using NAD as a coenzyme and as the energy source for the reaction. It is essential for DNA replication and repair of damaged DNA. The sequence is that of DNA ligase from Rhizobium meliloti (strain 1021) (Ensifer meliloti).